The following is a 135-amino-acid chain: DFIIFFIFMFFSPSCILSQTLQESGPGTVKPSESLRLTCTVSGFELSSYHMHWIRQPPGKGLEWIGVIATGGSTAIADSLKNRVTITKDNGKKQVYLQMNGMEVKDTAMYYCAREYASGYNFDYWGQGTMVTVTS.

A signal peptide spans 1–18 (DFIIFFIFMFFSPSCILS). The region spanning 20-128 (TLQESGPGTV…GYNFDYWGQG (109 aa)) is the Ig-like domain.

The polypeptide is Ig heavy chain V region XIG14 (Xenopus laevis (African clawed frog)).